Reading from the N-terminus, the 114-residue chain is Large ribosomal subunit protein bL17 (114 aa).

It belongs to the bacterial ribosomal protein bL17 family. In terms of assembly, part of the 50S ribosomal subunit. Contacts protein L32.

This Clostridium acetobutylicum (strain ATCC 824 / DSM 792 / JCM 1419 / IAM 19013 / LMG 5710 / NBRC 13948 / NRRL B-527 / VKM B-1787 / 2291 / W) protein is Large ribosomal subunit protein bL17.